The following is a 200-amino-acid chain: Putative hydrolase MhqD (200 aa).

Catalysis depends on charge relay system residues Ser-100, Asp-150, and His-181.

It belongs to the AB hydrolase superfamily. AB hydrolase 2 family.

It is found in the cytoplasm. In terms of biological role, putative hydrolase that may contribute to the degradation of aromatic compounds. The sequence is that of Putative hydrolase MhqD (mhqD) from Bacillus subtilis (strain 168).